The following is a 928-amino-acid chain: Nuclear pore complex-interacting protein family member B12 (928 aa).

A helical transmembrane segment spans residues 73 to 93; that stretch reads VVITLWIVYLWVSLLKTIFWS. Disordered regions lie at residues 242–452 and 663–928; these read RMGH…NIKT and ERLR…RRLS. Polar residues predominate over residues 252-263; it reads QQHSITDNSLSL. Over residues 349–359 the composition is skewed to pro residues; it reads PLPPSAPPSAP. Basic and acidic residues-rich tracts occupy residues 406-416, 698-708, 740-750, and 782-792; these read DNIKTPAERLR.

The protein belongs to the NPIP family.

The protein localises to the membrane. This is Nuclear pore complex-interacting protein family member B12 from Homo sapiens (Human).